Consider the following 511-residue polypeptide: Phenylalanine--tRNA ligase alpha subunit (511 aa).

Residues T352, 390–392, Y429, and F455 contribute to the L-phenylalanine site; that span reads QVE.

Belongs to the class-II aminoacyl-tRNA synthetase family. Phe-tRNA synthetase alpha subunit type 2 subfamily. Tetramer of two alpha and two beta subunits. Mg(2+) is required as a cofactor.

The protein localises to the cytoplasm. The enzyme catalyses tRNA(Phe) + L-phenylalanine + ATP = L-phenylalanyl-tRNA(Phe) + AMP + diphosphate + H(+). In Methanothermobacter thermautotrophicus (strain ATCC 29096 / DSM 1053 / JCM 10044 / NBRC 100330 / Delta H) (Methanobacterium thermoautotrophicum), this protein is Phenylalanine--tRNA ligase alpha subunit.